Reading from the N-terminus, the 447-residue chain is Cytochrome P450 monooxygenase aunB (447 aa).

C386 contributes to the heme binding site.

This sequence belongs to the cytochrome P450 family. The cofactor is heme.

The enzyme catalyses 2 fonsecin B + NADPH + O2 + H(+) = aurasperone B + NADP(+) + 2 H2O. It carries out the reaction 2 rubrofusarin B + NADPH + O2 + H(+) = aurasperone A + NADP(+) + 2 H2O. It functions in the pathway secondary metabolite biosynthesis. Its function is as follows. Cytochrome P450 monooxygenase; part of the gene cluster that mediates the biosynthesis of aurasperone B, a dimeric gamma-naphthopyrone. The first step in the biosynthesis of aurasperone B is the production of gamma-naphthopyrone precursor YWA1 by the non-reducing polyketide synthase albA, via condensation of one acetyl-CoA starter unit with 6 malonyl-CoA units. YWA1 is then methylated by aunE at position C-6 to yield foncesin which is further methylated at position C-8 by aunD to produce fonsecin B. A key enzyme in the biosynthetic pathway is the cytochrome P450 monooxygenase aunB which catalyzes the oxidative dimerization of fonsecin B to aurasperone B. AunB also catalyzes the oxidative dimerization of rubrofusarin B into aurasperone A. The chain is Cytochrome P450 monooxygenase aunB from Aspergillus niger (strain ATCC MYA-4892 / CBS 513.88 / FGSC A1513).